The following is a 263-amino-acid chain: N-acyl homoserine lactonase AttM (263 aa).

The Zn(2+) site is built by His-103, His-105, Asp-107, His-108, His-180, Asp-202, and His-247.

It belongs to the metallo-beta-lactamase superfamily. Zn(2+) serves as cofactor.

It catalyses the reaction an N-acyl-L-homoserine lactone + H2O = an N-acyl-L-homoserine + H(+). This is N-acyl homoserine lactonase AttM (attM) from Rhizobium radiobacter (Agrobacterium tumefaciens).